The primary structure comprises 476 residues: POC1 centriolar protein homolog B (476 aa).

WD repeat units follow at residues 16 to 55, 58 to 97, 100 to 139, 142 to 181, 183 to 223, 226 to 265, and 268 to 307; these read GHKA…RAYR, GHKD…KSSE, AHTA…FLYS, RHTH…CVNN, SDSV…LLQH, VHSC…LIYT, and GHTG…LHCK. Residues 429–468 adopt a coiled-coil conformation; sequence ALEHIMEQLNILTQTVSILEQRLSLTEDKLRDCLENQQKL.

Belongs to the WD repeat POC1 family. As to quaternary structure, interacts with POC1A. Interacts with FAM161A. Interacts with CEP44; the interaction is direct and recruits POC1B to centriolar microtubules. Forms a microtubule-associated complex with POC5, CETN2 and FAM161A. Interacts with CCDC15. In terms of processing, phosphorylated in mitotic cells that may be mediated by CDK1. In terms of tissue distribution, expressed in the retina.

It localises to the cytoplasm. It is found in the cytoskeleton. The protein localises to the microtubule organizing center. Its subcellular location is the centrosome. The protein resides in the centriole. It localises to the cilium basal body. It is found in the spindle pole. Functionally, plays an important role in centriole assembly and/or stability and ciliogenesis. Involved in early steps of centriole duplication, as well as in the later steps of centriole length control. Acts in concert with POC1A to ensure centriole integrity and proper mitotic spindle formation. Required for primary cilia formation, ciliary length and also cell proliferation. Required for retinal integrity. Acts as a positive regulator of centriole elongation. In Mus musculus (Mouse), this protein is POC1 centriolar protein homolog B (Poc1b).